We begin with the raw amino-acid sequence, 576 residues long: Arginine--tRNA ligase (576 aa).

The 'HIGH' region signature appears at 126–136 (ANPTGPMHIGH).

This sequence belongs to the class-I aminoacyl-tRNA synthetase family. Monomer.

The protein resides in the cytoplasm. It catalyses the reaction tRNA(Arg) + L-arginine + ATP = L-arginyl-tRNA(Arg) + AMP + diphosphate. The sequence is that of Arginine--tRNA ligase from Rickettsia canadensis (strain McKiel).